The chain runs to 353 residues: Stearoyl-CoA desaturase 4 (353 aa).

Residues 1–42 (MTAHLPQEISSRCSTTNIMEPHSRRQQDGEEKMPLQAEDIRP) form a disordered region. The Cytoplasmic portion of the chain corresponds to 1-66 (MTAHLPQEIS…EGPPPKLEYV (66 aa)). The segment covering 8–18 (EISSRCSTTNI) has biased composition (polar residues). Positions 21 to 42 (PHSRRQQDGEEKMPLQAEDIRP) are enriched in basic and acidic residues. The helical transmembrane segment at 67–87 (WRNIIFMALLHVGALYGITLV) threads the bilayer. Asn69 contributes to the substrate binding site. The Lumenal segment spans residues 88 to 91 (PSCK). Residues 92–112 (VYTWLLGVFYNVVAGLGITAG) traverse the membrane as a helical segment. The Cytoplasmic segment spans residues 113–211 (AHRLWSHRTY…EKLVMFQRRY (99 aa)). The Fe cation site is built by His114 and His119. A Histidine box-1 motif is present at residues 114 to 119 (HRLWSH). Asn142, Arg149, and Asp150 together coordinate substrate. Positions 151, 154, and 155 each coordinate Fe cation. Residues 151–155 (HRAHH) carry the Histidine box-2 motif. Substrate is bound by residues Arg182 and Lys183. The helical transmembrane segment at 212–231 (YKLAVTLMFIILPTLVPWYL) threads the bilayer. Over 232–235 (WGET) the chain is Lumenal. Residues 236–257 (FQHSLCVSNFLRYAVLLNFTWL) traverse the membrane as a helical segment. Trp256 lines the substrate pocket. Topologically, residues 258 to 353 (VNSAAHLYGY…RTGDGSHKSS (96 aa)) are cytoplasmic. The Fe cation site is built by His263, His292, His295, and His296. Residues 292 to 296 (HNYHH) carry the Histidine box-3 motif.

The protein belongs to the fatty acid desaturase type 1 family. Requires Fe(2+) as cofactor. Detected in heart, but not in brain, liver, skin or adipose tissue.

Its subcellular location is the endoplasmic reticulum membrane. The protein localises to the microsome membrane. The enzyme catalyses octadecanoyl-CoA + 2 Fe(II)-[cytochrome b5] + O2 + 2 H(+) = (9Z)-octadecenoyl-CoA + 2 Fe(III)-[cytochrome b5] + 2 H2O. It catalyses the reaction hexadecanoyl-CoA + 2 Fe(II)-[cytochrome b5] + O2 + 2 H(+) = (9Z)-hexadecenoyl-CoA + 2 Fe(III)-[cytochrome b5] + 2 H2O. Its function is as follows. Stearoyl-CoA desaturase that utilizes O(2) and electrons from reduced cytochrome b5 to introduce the first double bond into saturated fatty acyl-CoA substrates. Catalyzes the insertion of a cis double bond at the delta-9 position into fatty acyl-CoA substrates including palmitoyl-CoA and stearoyl-CoA. Required for the biosynthesis of membrane phospholipids, cholesterol esters and triglycerides. This chain is Stearoyl-CoA desaturase 4, found in Mus musculus (Mouse).